The sequence spans 905 residues: DNA mismatch repair protein MutS (905 aa).

The interval 272–292 (KKPPLSPPSREATGSTMAIDP) is disordered. Residue 654 to 661 (GPNMAGKS) coordinates ATP.

The protein belongs to the DNA mismatch repair MutS family.

This protein is involved in the repair of mismatches in DNA. It is possible that it carries out the mismatch recognition step. This protein has a weak ATPase activity. This chain is DNA mismatch repair protein MutS, found in Rhodopseudomonas palustris (strain BisB18).